A 248-amino-acid polypeptide reads, in one-letter code: ATP synthase subunit a, chloroplastic (248 aa).

A run of 5 helical transmembrane segments spans residues Q38–V58, V96–L116, I135–A155, L200–L220, and G221–G241.

It belongs to the ATPase A chain family. F-type ATPases have 2 components, CF(1) - the catalytic core - and CF(0) - the membrane proton channel. CF(1) has five subunits: alpha(3), beta(3), gamma(1), delta(1), epsilon(1). CF(0) has four main subunits: a, b, b' and c.

The protein localises to the plastid. Its subcellular location is the chloroplast thylakoid membrane. Its function is as follows. Key component of the proton channel; it plays a direct role in the translocation of protons across the membrane. The sequence is that of ATP synthase subunit a, chloroplastic from Cycas taitungensis (Prince sago).